We begin with the raw amino-acid sequence, 437 residues long: Probable exopolygalacturonase C (437 aa).

The first 21 residues, Met1–Gly21, serve as a signal peptide directing secretion. N-linked (GlcNAc...) asparagine glycosylation is found at Asn25, Asn42, Asn82, Asn99, and Asn149. PbH1 repeat units follow at residues Gly215–Ser236 and Ser238–Ser259. Asp229 (proton donor) is an active-site residue. His253 is a catalytic residue. A glycan (N-linked (GlcNAc...) asparagine) is linked at Asn269. PbH1 repeat units lie at residues Ile270–Ser291 and Val299–Gln320. Asn301 and Asn311 each carry an N-linked (GlcNAc...) asparagine glycan. Residues Cys386 and Cys392 are joined by a disulfide bond. 2 N-linked (GlcNAc...) asparagine glycosylation sites follow: Asn428 and Asn431.

The protein belongs to the glycosyl hydrolase 28 family.

Its subcellular location is the secreted. The enzyme catalyses [(1-&gt;4)-alpha-D-galacturonosyl](n) + H2O = alpha-D-galacturonate + [(1-&gt;4)-alpha-D-galacturonosyl](n-1). Functionally, specific in hydrolyzing the terminal glycosidic bond of polygalacturonic acid and oligogalacturonates. In Aspergillus flavus (strain ATCC 200026 / FGSC A1120 / IAM 13836 / NRRL 3357 / JCM 12722 / SRRC 167), this protein is Probable exopolygalacturonase C (pgxC).